We begin with the raw amino-acid sequence, 1732 residues long: Transient receptor potential cation channel subfamily M member 3 (1732 aa).

The Cytoplasmic portion of the chain corresponds to 1-894; that stretch reads MPGPWGTVYF…RKIYEFYNAP (894 aa). Calmodulin-binding stretches follow at residues 41 to 64, 192 to 215, 300 to 323, 601 to 624, and 793 to 816; these read WTIRKLCHAAFLPSVRLLKAQKSW, NFELQPKLKQVFGKGLIKAAMTTG, TGKYGAEVKLRRQLEKHISLQKIN, RKRFRTLYHNLFGPKRPKALKLLG, and RKNSGLKVILGILLPPSILSLEFK. The interval 617–625 is required for the inhibitory action of G-beta/gamma-subunits of heterotrimeric G-proteins; that stretch reads PKALKLLGM. Ser-796 serves as a coordination point for 1,2-dioctanoyl-sn-glycero-3-phospho-(1D-myo-inositol-4,5-bisphosphate). The tract at residues 829-851 is disordered; that stretch reads EIHLQEKEPEEPEKPTKEKDEED. Residues 831–847 are compositionally biased toward basic and acidic residues; it reads HLQEKEPEEPEKPTKEK. A helical transmembrane segment spans residues 895–918; it reads IVKFWFYTLAYIGYLMLFNYIVLV. The Extracellular portion of the chain corresponds to 919 to 925; it reads KMERWPS. Residues 926–948 traverse the membrane as a helical segment; sequence TQEWIVISYIFTLGIEKMREILM. The Cytoplasmic portion of the chain corresponds to 949–964; that stretch reads SEPGKLLQKVKVWLQE. A helical transmembrane segment spans residues 965–985; that stretch reads YWNVTDLIAILLFSVGMILRL. Residues 986–989 are Extracellular-facing; that stretch reads QDQP. A helical transmembrane segment spans residues 990-1013; the sequence is FRSDGRVIYCVNIIYWYIRLLDIF. At 1014 to 1028 the chain is on the cytoplasmic side; the sequence is GVNKYLGPYVMMIGK. Residues Lys-1017 and Tyr-1018 each coordinate 1,2-dioctanoyl-sn-glycero-3-phospho-(1D-myo-inositol-4,5-bisphosphate). Residues 1029–1056 form a helical membrane-spanning segment; that stretch reads MMIDMMYFVIIMLVVLMSFGVARQAILF. Residues 1057 to 1073 lie on the Extracellular side of the membrane; the sequence is PNEEPSWKLAKNIFYMP. The pore-forming intramembrane region spans 1074–1101; the sequence is YWMIYGEVFADQIDPPCGQNETREDGKT. The Extracellular segment spans residues 1102-1111; it reads IQLPPCKTGA. A helical transmembrane segment spans residues 1112–1137; it reads WIVPAIMACYLLVANILLVNLLIAVF. The Cytoplasmic segment spans residues 1138–1732; the sequence is NNTFFEVKSI…AFHSFESKHN (595 aa). The disordered stretch occupies residues 1610–1732; that stretch reads EREAELSHPS…AFHSFESKHN (123 aa). Composition is skewed to polar residues over residues 1635-1653 and 1690-1701; these read PISSQEAENADRTLSNNIT and NTASLRNPFQRS.

The protein belongs to the transient receptor (TC 1.A.4) family. LTrpC subfamily. TRPM3 sub-subfamily. In terms of assembly, homotetramer. Interacts with TRPM1; the interaction results in the formation of a heteromultimeric cation channel complex that are functionally different from the homomeric channels.

Its subcellular location is the cell membrane. It catalyses the reaction Ca(2+)(in) = Ca(2+)(out). It carries out the reaction Mn(2+)(in) = Mn(2+)(out). The enzyme catalyses Zn(2+)(in) = Zn(2+)(out). The catalysed reaction is Mg(2+)(in) = Mg(2+)(out). It catalyses the reaction Na(+)(in) = Na(+)(out). Its activity is regulated as follows. Activated by the neurosteroid pregnelonone sulfate (PregS). PregS activates the channel by shifting its current-voltage activation curve toward more negative membrane potentials and also potentiates temperature-induced activation. Activated by heat. Intracellular Ca(2+) inhibits TRPM3 probably via interaction with Ca(2+)/calmodulin. Intracellular Mg(2+) inhibits TRPM3 activity. Both intracellular and extracellular protons block TRPM3 through propable binding sites in the pore region. Positively regulated by phosphoinositide phosphoinositol 4,5-biphosphate (PI(4,5)P2). Strongly inhibited by activation of G(i)-coupled receptors via direct binding with G-beta/gamma-subunits of heterotrimeric G-proteins. With respect to regulation, insensitive to pregnenolone sulfate (PregS) or heat. Not inhibited by G-beta/gamma-subunits of heterotrimeric G-proteins. Its function is as follows. Constitutively active, non-selective divalent cation-conducting channel that is permeable to Ca(2+), Mn(2+), and Mg(2+), with a high permeability for Ca(2+). However, can be enhanced by increasing temperature and by ligands, including the endogenous neurosteroid pregnenolone sulfate and sphingosine-1 and suppressed by intracellular Mg(2+). Implicated in a variety of cellular processes, including insulin/peptide secretion, vascular constriction and dilation, noxious heat sensing, inflammatory and spontaneous pain sensitivity. In neurons of the dorsal root ganglia, functions as thermosensitive channel for the detection of noxious heat and spontaneous pain. Suggested to function as an ionotropic steroid receptor in beta-cell, indeed pregnenolone sulfate leads to Ca(2+) influx and enhanced insulin secretion. Mediates Zn(2+) uptake into the lumen of pancreatic beta cell secretory granules, thereby regulating insulin secretion. Forms heteromultimeric ion channels with TRPM1 which are permeable for Ca(2+) and Zn(2+) ions. Exists as multiple splice variants which differ significantly in their biophysical properties. In terms of biological role, displays strongly reduced permeability for divalent cations and high selectivity toward monovalent cations. Functionally, no channel activity. The chain is Transient receptor potential cation channel subfamily M member 3 from Mus musculus (Mouse).